The chain runs to 293 residues: Putative ABC transporter ATP-binding protein AF_0731 (293 aa).

One can recognise an ABC transporter domain in the interval 2-236; it reads IEAVDLHFCY…RKLGIRSFSL (235 aa). 34–41 contributes to the ATP binding site; that stretch reads GRNGAGKT.

It belongs to the ABC transporter superfamily.

The protein localises to the cell membrane. In terms of biological role, probably part of an ABC transporter complex. Responsible for energy coupling to the transport system. This chain is Putative ABC transporter ATP-binding protein AF_0731, found in Archaeoglobus fulgidus (strain ATCC 49558 / DSM 4304 / JCM 9628 / NBRC 100126 / VC-16).